The chain runs to 135 residues: uncharacterized protein (135 aa).

Residues 8–123 (PKGKMVLRTL…IFVYVAVDEF (116 aa)) enclose the HotDog ACOT-type domain.

The protein belongs to the acyl coenzyme A hydrolase family.

This is an uncharacterized protein from Buchnera aphidicola subsp. Baizongia pistaciae (strain Bp).